A 158-amino-acid polypeptide reads, in one-letter code: Rhombotin-2 (158 aa).

2 LIM zinc-binding domains span residues 28–90 (LTCG…LFGQ) and 92–154 (GLCA…WTKL).

Expression becomes restricted to the ventral blood island (VBI) as the embryo develops. In late neurula and early tailbud embryos, also expressed in the dorsal lateral plate (DLP), the site of definitive hematopoiesis in the tadpole. Expression in the DLP diminishes during tailbud stages. Expressed in circulating blood cells of tadpoles. Also expressed in non-hematopoietic sites, including the tailbud region and the central nervous system of early neurula embryos.

It localises to the nucleus. Transcription factor that acts synergistically with tal1/scl and gata1 to specify embryonic dorsal mesoderm to a hematopoietic fate. Induces globin gene expression together with fgf. The chain is Rhombotin-2 from Xenopus laevis (African clawed frog).